The chain runs to 317 residues: Apolipoprotein E (317 aa).

The N-terminal stretch at 1-18 is a signal peptide; it reads MKVLWAALLVTFLAGCQA. Repeat copies occupy residues 80–101, 102–123, 124–145, 146–167, 168–189, 190–211, 212–233, and 234–255. The segment at 80–255 is 8 X 22 AA approximate tandem repeats; it reads ALMDETMKEL…RLDEVKEQVA (176 aa). M143 is subject to Methionine sulfoxide. S147 carries the phosphoserine modification. The segment at 158-168 is LDL and other lipoprotein receptors binding; sequence HLRKLRKRLLR. 162–165 is a heparin binding site; sequence LRKR. The tract at residues 210–290 is lipid-binding and lipoprotein association; sequence AATVGSLAGQ…SWFEPLVEDM (81 aa). 229 to 236 provides a ligand contact to heparin; that stretch reads GERLRARM. Positions 266–317 are homooligomerization; it reads QQIRLQAEAFQARLKSWFEPLVEDMQRQWAGLVEKVQAAMGTSAAPVPSDNH. The segment at 278-290 is specificity for association with VLDL; it reads RLKSWFEPLVEDM.

The protein belongs to the apolipoprotein A1/A4/E family. In terms of assembly, homotetramer. May interact with ABCA1; functionally associated with ABCA1 in the biogenesis of HDLs. May interact with APP/A4 amyloid-beta peptide; the interaction is extremely stable in vitro but its physiological significance is unclear. May interact with MAPT. May interact with MAP2. In the cerebrospinal fluid, interacts with secreted SORL1. Interacts with PMEL; this allows the loading of PMEL luminal fragment on ILVs to induce fibril nucleation. APOE exists as multiple glycosylated and sialylated glycoforms within cells and in plasma. The extent of glycosylation and sialylation are tissue and context specific. Post-translationally, glycated in plasma VLDL. In terms of processing, phosphorylated by FAM20C in the extracellular medium.

The protein localises to the secreted. It is found in the extracellular space. Its subcellular location is the extracellular matrix. It localises to the extracellular vesicle. The protein resides in the endosome. The protein localises to the multivesicular body. Its function is as follows. APOE is an apolipoprotein, a protein associating with lipid particles, that mainly functions in lipoprotein-mediated lipid transport between organs via the plasma and interstitial fluids. APOE is a core component of plasma lipoproteins and is involved in their production, conversion and clearance. Apolipoproteins are amphipathic molecules that interact both with lipids of the lipoprotein particle core and the aqueous environment of the plasma. As such, APOE associates with chylomicrons, chylomicron remnants, very low density lipoproteins (VLDL) and intermediate density lipoproteins (IDL) but shows a preferential binding to high-density lipoproteins (HDL). It also binds a wide range of cellular receptors including the LDL receptor/LDLR, the LDL receptor-related proteins LRP1, LRP2 and LRP8 and the very low-density lipoprotein receptor/VLDLR that mediate the cellular uptake of the APOE-containing lipoprotein particles. Finally, APOE also has a heparin-binding activity and binds heparan-sulfate proteoglycans on the surface of cells, a property that supports the capture and the receptor-mediated uptake of APOE-containing lipoproteins by cells. A main function of APOE is to mediate lipoprotein clearance through the uptake of chylomicrons, VLDLs, and HDLs by hepatocytes. APOE is also involved in the biosynthesis by the liver of VLDLs as well as their uptake by peripheral tissues ensuring the delivery of triglycerides and energy storage in muscle, heart and adipose tissues. By participating in the lipoprotein-mediated distribution of lipids among tissues, APOE plays a critical role in plasma and tissues lipid homeostasis. APOE is also involved in two steps of reverse cholesterol transport, the HDLs-mediated transport of cholesterol from peripheral tissues to the liver, and thereby plays an important role in cholesterol homeostasis. First, it is functionally associated with ABCA1 in the biogenesis of HDLs in tissues. Second, it is enriched in circulating HDLs and mediates their uptake by hepatocytes. APOE also plays an important role in lipid transport in the central nervous system, regulating neuron survival and sprouting. The chain is Apolipoprotein E (APOE) from Gorilla gorilla gorilla (Western lowland gorilla).